The chain runs to 251 residues: Octanoyltransferase (251 aa).

The 186-residue stretch at 56–241 (ADTGDEIWVV…NLDGASAAAD (186 aa)) folds into the BPL/LPL catalytic domain. Residues 96 to 103 (RGGQITYH), 168 to 170 (ALG), and 181 to 183 (GLS) contribute to the substrate site. Catalysis depends on C199, which acts as the Acyl-thioester intermediate.

Belongs to the LipB family.

The protein resides in the cytoplasm. It catalyses the reaction octanoyl-[ACP] + L-lysyl-[protein] = N(6)-octanoyl-L-lysyl-[protein] + holo-[ACP] + H(+). It participates in protein modification; protein lipoylation via endogenous pathway; protein N(6)-(lipoyl)lysine from octanoyl-[acyl-carrier-protein]: step 1/2. In terms of biological role, catalyzes the transfer of endogenously produced octanoic acid from octanoyl-acyl-carrier-protein onto the lipoyl domains of lipoate-dependent enzymes. Lipoyl-ACP can also act as a substrate although octanoyl-ACP is likely to be the physiological substrate. The protein is Octanoyltransferase of Burkholderia orbicola (strain AU 1054).